We begin with the raw amino-acid sequence, 474 residues long: L-arabinose isomerase (474 aa).

E306, E331, H348, and H447 together coordinate Mn(2+).

Belongs to the arabinose isomerase family. It depends on Mn(2+) as a cofactor.

It carries out the reaction beta-L-arabinopyranose = L-ribulose. Its pathway is carbohydrate degradation; L-arabinose degradation via L-ribulose; D-xylulose 5-phosphate from L-arabinose (bacterial route): step 1/3. In terms of biological role, catalyzes the conversion of L-arabinose to L-ribulose. The sequence is that of L-arabinose isomerase from Leuconostoc mesenteroides subsp. mesenteroides (strain ATCC 8293 / DSM 20343 / BCRC 11652 / CCM 1803 / JCM 6124 / NCDO 523 / NBRC 100496 / NCIMB 8023 / NCTC 12954 / NRRL B-1118 / 37Y).